Reading from the N-terminus, the 764-residue chain is 5-methyltetrahydropteroyltriglutamate--homocysteine methyltransferase (764 aa).

Residues 16–19 (RELK) and K112 contribute to the 5-methyltetrahydropteroyltri-L-glutamate site. Residues 431-433 (IGS) and E484 contribute to the L-homocysteine site. L-methionine is bound by residues 431 to 433 (IGS) and E484. 5-methyltetrahydropteroyltri-L-glutamate-binding positions include 515–516 (RC) and W561. D599 serves as a coordination point for L-homocysteine. Residue D599 participates in L-methionine binding. E605 serves as a coordination point for 5-methyltetrahydropteroyltri-L-glutamate. Residues H641, C643, and E665 each coordinate Zn(2+). H694 (proton donor) is an active-site residue. Residue C726 coordinates Zn(2+).

It belongs to the vitamin-B12 independent methionine synthase family. Zn(2+) is required as a cofactor.

It catalyses the reaction 5-methyltetrahydropteroyltri-L-glutamate + L-homocysteine = tetrahydropteroyltri-L-glutamate + L-methionine. The protein operates within amino-acid biosynthesis; L-methionine biosynthesis via de novo pathway; L-methionine from L-homocysteine (MetE route): step 1/1. Its function is as follows. Catalyzes the transfer of a methyl group from 5-methyltetrahydrofolate to homocysteine resulting in methionine formation. This Paraburkholderia phytofirmans (strain DSM 17436 / LMG 22146 / PsJN) (Burkholderia phytofirmans) protein is 5-methyltetrahydropteroyltriglutamate--homocysteine methyltransferase.